We begin with the raw amino-acid sequence, 559 residues long: Paxillin (559 aa).

An LD motif 1 motif is present at residues 3–15 (DLDALLADLESTT). The disordered stretch occupies residues 17 to 139 (HISKRPVFLT…SPTMTSTSLG (123 aa)). Position 31 is a phosphotyrosine (Tyr31). Residues 45 to 54 (VPPPVPPPPS) are compositionally biased toward pro residues. The segment covering 79–98 (QQPQSQSPIYSSSAKSSSAS) has biased composition (low complexity). Position 118 is a phosphotyrosine; by FAK1 (Tyr118). Over residues 121–137 (PNKQKSAEPSPTMTSTS) the composition is skewed to polar residues. Positions 144 to 156 (ELDRLLLELNAVQ) match the LD motif 2 motif. Disordered regions lie at residues 158 to 213 (NPPS…GIED) and 225 to 262 (LESS…SASS). The short motif at 217 to 229 (SVESLLDELESSV) is the LD motif 3 element. The span at 237-262 (TVSQGEVSSPQRVNASQQQTRISASS) shows a compositional bias: polar residues. Positions 263–282 (ATRELDELMASLSDFKFMAQ) are required for binding to PARVA and ILK. 2 short sequence motifs (LD motif) span residues 266 to 277 (ELDELMASLSDF) and 301 to 313 (QLDT…QSDL). A disordered region spans residues 281–301 (AQGKAGGSSSPPSTTPKPGSQ). LIM zinc-binding domains are found at residues 326–376 (CGAC…CEKD), 385–435 (CYYC…CRKD), 444–494 (CGGC…CEVH), and 503–553 (CSGC…CQNC).

In terms of assembly, interacts (via LD motif 4) with PARVA/PARVIN and ILK. In terms of processing, phosphorylated on tyrosine residues during integrin-mediated cell adhesion, embryonic development, fibroblast transformation and following stimulation of cells by mitogens.

It is found in the cytoplasm. The protein localises to the cytoskeleton. It localises to the cell junction. Its subcellular location is the focal adhesion. The protein resides in the cell cortex. Functionally, cytoskeletal protein involved in actin-membrane attachment at sites of cell adhesion to the extracellular matrix (focal adhesion). Binds in vitro to vinculin as well as to the SH3 domain of c-SRC and, when tyrosine phosphorylated, to the SH2 domain of v-CRK. The protein is Paxillin (PXN) of Gallus gallus (Chicken).